A 90-amino-acid chain; its full sequence is Large ribosomal subunit protein bL27 (90 aa).

Residues 1–22 (MAHKKSGGSSSNGRDSAGRRLG) form a disordered region.

The protein belongs to the bacterial ribosomal protein bL27 family.

The chain is Large ribosomal subunit protein bL27 from Caulobacter sp. (strain K31).